The sequence spans 262 residues: Hydroxyethylthiazole kinase (262 aa).

A substrate-binding site is contributed by Met-44. ATP-binding residues include Arg-118 and Thr-166. Residue Gly-193 participates in substrate binding.

This sequence belongs to the Thz kinase family. Requires Mg(2+) as cofactor.

It carries out the reaction 5-(2-hydroxyethyl)-4-methylthiazole + ATP = 4-methyl-5-(2-phosphooxyethyl)-thiazole + ADP + H(+). Its pathway is cofactor biosynthesis; thiamine diphosphate biosynthesis; 4-methyl-5-(2-phosphoethyl)-thiazole from 5-(2-hydroxyethyl)-4-methylthiazole: step 1/1. In terms of biological role, catalyzes the phosphorylation of the hydroxyl group of 4-methyl-5-beta-hydroxyethylthiazole (THZ). This chain is Hydroxyethylthiazole kinase, found in Chlamydia caviae (strain ATCC VR-813 / DSM 19441 / 03DC25 / GPIC) (Chlamydophila caviae).